The chain runs to 170 residues: Ribulose bisphosphate carboxylase small subunit, chloroplastic (170 aa).

Transit peptides (chloroplast) lie at residues 1–46 (MAPT…GRIR) and 1–47 (MAPT…RIRC).

The protein belongs to the RuBisCO small chain family. As to quaternary structure, heterohexadecamer of 8 large and 8 small subunits.

It localises to the plastid. The protein resides in the chloroplast. Its function is as follows. RuBisCO catalyzes two reactions: the carboxylation of D-ribulose 1,5-bisphosphate, the primary event in carbon dioxide fixation, as well as the oxidative fragmentation of the pentose substrate. Both reactions occur simultaneously and in competition at the same active site. Although the small subunit is not catalytic it is essential for maximal activity. The chain is Ribulose bisphosphate carboxylase small subunit, chloroplastic from Zea mays (Maize).